The following is a 410-amino-acid chain: 2-oxoisovalerate dehydrogenase subunit alpha (410 aa).

It belongs to the BCKDHA family. In terms of assembly, heterodimer of an alpha and a beta chain. The cofactor is thiamine diphosphate.

It carries out the reaction N(6)-[(R)-lipoyl]-L-lysyl-[protein] + 3-methyl-2-oxobutanoate + H(+) = N(6)-[(R)-S(8)-2-methylpropanoyldihydrolipoyl]-L-lysyl-[protein] + CO2. In terms of biological role, the branched-chain alpha-keto dehydrogenase complex catalyzes the overall conversion of alpha-keto acids to acyl-CoA and CO(2). It contains multiple copies of three enzymatic components: branched-chain alpha-keto acid decarboxylase (E1), lipoamide acyltransferase (E2) and lipoamide dehydrogenase (E3). The protein is 2-oxoisovalerate dehydrogenase subunit alpha (bkdA1) of Pseudomonas putida (Arthrobacter siderocapsulatus).